The sequence spans 700 residues: Mitogen-activated protein kinase 9 (700 aa).

One can recognise a Protein kinase domain in the interval 107–398 (YRIQEVIGKG…AEEALTDPYF (292 aa)). Residues 113 to 121 (IGKGSYGVV) and K136 each bind ATP. Catalysis depends on D233, which acts as the Proton acceptor. T269 carries the phosphothreonine modification. The TXY signature appears at 269 to 271 (TDY). Y271 bears the Phosphotyrosine mark. Residues 475–523 (EESNGSGSAIPMERKHASLPRSTTVHSTPIPPKEQPLAASLKSSRPVSD) form a disordered region.

This sequence belongs to the protein kinase superfamily. CMGC Ser/Thr protein kinase family. MAP kinase subfamily. Post-translationally, dually phosphorylated on Thr-269 and Tyr-271, which activates the enzyme.

The catalysed reaction is L-seryl-[protein] + ATP = O-phospho-L-seryl-[protein] + ADP + H(+). It catalyses the reaction L-threonyl-[protein] + ATP = O-phospho-L-threonyl-[protein] + ADP + H(+). Activated by threonine and tyrosine phosphorylation. The protein is Mitogen-activated protein kinase 9 (MPK9) of Oryza sativa subsp. japonica (Rice).